The chain runs to 168 residues: GTP-dependent dephospho-CoA kinase (168 aa).

GTP is bound by residues Asp49, Ile50, Val51, Asp68, Lys70, and Glu120.

This sequence belongs to the GTP-dependent DPCK family.

The catalysed reaction is 3'-dephospho-CoA + GTP = GDP + CoA + H(+). It functions in the pathway cofactor biosynthesis; coenzyme A biosynthesis. In terms of biological role, catalyzes the GTP-dependent phosphorylation of the 3'-hydroxyl group of dephosphocoenzyme A to form coenzyme A (CoA). In Pyrobaculum islandicum (strain DSM 4184 / JCM 9189 / GEO3), this protein is GTP-dependent dephospho-CoA kinase.